Reading from the N-terminus, the 431-residue chain is UDP-N-acetylmuramate--L-alanine ligase (431 aa).

An ATP-binding site is contributed by 108–114; it reads GAHGKST.

The protein belongs to the MurCDEF family.

Its subcellular location is the cytoplasm. It carries out the reaction UDP-N-acetyl-alpha-D-muramate + L-alanine + ATP = UDP-N-acetyl-alpha-D-muramoyl-L-alanine + ADP + phosphate + H(+). It functions in the pathway cell wall biogenesis; peptidoglycan biosynthesis. Cell wall formation. This chain is UDP-N-acetylmuramate--L-alanine ligase, found in Campylobacter jejuni subsp. jejuni serotype O:6 (strain 81116 / NCTC 11828).